We begin with the raw amino-acid sequence, 317 residues long: Cytochrome f (317 aa).

The first 34 residues, 1-34 (MKGLKNQIMKKTSLFICTLLFILSIVFYPKITFA), serve as a signal peptide directing secretion. Residues Tyr-35, Cys-55, Cys-58, and His-59 each coordinate heme. The chain crosses the membrane as a helical span at residues 284 to 304 (VIGLIAFFIGVGLTQILLVLK).

The protein belongs to the cytochrome f family. The 4 large subunits of the cytochrome b6-f complex are cytochrome b6, subunit IV (17 kDa polypeptide, PetD), cytochrome f and the Rieske protein, while the 4 small subunits are PetG, PetL, PetM and PetN. The complex functions as a dimer. Requires heme as cofactor.

It is found in the cellular thylakoid membrane. Functionally, component of the cytochrome b6-f complex, which mediates electron transfer between photosystem II (PSII) and photosystem I (PSI), cyclic electron flow around PSI, and state transitions. This Prochlorococcus marinus (strain MIT 9215) protein is Cytochrome f.